A 257-amino-acid chain; its full sequence is 1-(5-phosphoribosyl)-5-[(5-phosphoribosylamino)methylideneamino] imidazole-4-carboxamide isomerase (257 aa).

Residue Asp-8 is the Proton acceptor of the active site. The Proton donor role is filled by Asp-129.

This sequence belongs to the HisA/HisF family.

It is found in the cytoplasm. It carries out the reaction 1-(5-phospho-beta-D-ribosyl)-5-[(5-phospho-beta-D-ribosylamino)methylideneamino]imidazole-4-carboxamide = 5-[(5-phospho-1-deoxy-D-ribulos-1-ylimino)methylamino]-1-(5-phospho-beta-D-ribosyl)imidazole-4-carboxamide. It participates in amino-acid biosynthesis; L-histidine biosynthesis; L-histidine from 5-phospho-alpha-D-ribose 1-diphosphate: step 4/9. The sequence is that of 1-(5-phosphoribosyl)-5-[(5-phosphoribosylamino)methylideneamino] imidazole-4-carboxamide isomerase from Acaryochloris marina (strain MBIC 11017).